Here is a 505-residue protein sequence, read N- to C-terminus: Lysine--tRNA ligase (505 aa).

Mg(2+) is bound by residues glutamate 415 and glutamate 422.

The protein belongs to the class-II aminoacyl-tRNA synthetase family. As to quaternary structure, homodimer. Mg(2+) serves as cofactor.

It is found in the cytoplasm. The enzyme catalyses tRNA(Lys) + L-lysine + ATP = L-lysyl-tRNA(Lys) + AMP + diphosphate. In Vibrio parahaemolyticus serotype O3:K6 (strain RIMD 2210633), this protein is Lysine--tRNA ligase.